The sequence spans 372 residues: Bifunctional enzyme IspD/IspF (372 aa).

A 2-C-methyl-D-erythritol 4-phosphate cytidylyltransferase region spans residues 1-211 (MLDISLIMLG…SALKAPENEL (211 aa)). The 2-C-methyl-D-erythritol 2,4-cyclodiphosphate synthase stretch occupies residues 212 to 372 (FVGSGFDVHE…SLKFYNWTQI (161 aa)). Residues aspartate 218 and histidine 220 each contribute to the a divalent metal cation site. 4-CDP-2-C-methyl-D-erythritol 2-phosphate contacts are provided by residues 218 to 220 (DVH) and 244 to 245 (HS). Histidine 252 is a binding site for a divalent metal cation. Residues 266 to 268 (DIG), 271 to 275 (FPDTD), 342 to 345 (TTTE), phenylalanine 349, and arginine 352 contribute to the 4-CDP-2-C-methyl-D-erythritol 2-phosphate site.

The protein in the N-terminal section; belongs to the IspD/TarI cytidylyltransferase family. IspD subfamily. It in the C-terminal section; belongs to the IspF family. The cofactor is a divalent metal cation.

The catalysed reaction is 2-C-methyl-D-erythritol 4-phosphate + CTP + H(+) = 4-CDP-2-C-methyl-D-erythritol + diphosphate. It catalyses the reaction 4-CDP-2-C-methyl-D-erythritol 2-phosphate = 2-C-methyl-D-erythritol 2,4-cyclic diphosphate + CMP. Its pathway is isoprenoid biosynthesis; isopentenyl diphosphate biosynthesis via DXP pathway; isopentenyl diphosphate from 1-deoxy-D-xylulose 5-phosphate: step 2/6. It participates in isoprenoid biosynthesis; isopentenyl diphosphate biosynthesis via DXP pathway; isopentenyl diphosphate from 1-deoxy-D-xylulose 5-phosphate: step 4/6. Bifunctional enzyme that catalyzes the formation of 4-diphosphocytidyl-2-C-methyl-D-erythritol from CTP and 2-C-methyl-D-erythritol 4-phosphate (MEP) (IspD), and catalyzes the conversion of 4-diphosphocytidyl-2-C-methyl-D-erythritol 2-phosphate (CDP-ME2P) to 2-C-methyl-D-erythritol 2,4-cyclodiphosphate (ME-CPP) with a corresponding release of cytidine 5-monophosphate (CMP) (IspF). This chain is Bifunctional enzyme IspD/IspF, found in Campylobacter concisus (strain 13826).